Here is a 491-residue protein sequence, read N- to C-terminus: Nucleotidyltransferase MB21D2 (491 aa).

Polar residues predominate over residues 431 to 442; that stretch reads RGSTTSIPSPQS. Residues 431 to 452 are disordered; sequence RGSTTSIPSPQSDGGDPNQPDD. Threonine 435 is modified (phosphothreonine). Phosphoserine is present on residues serine 436, serine 439, and serine 442.

It belongs to the mab-21 family.

In terms of biological role, probable nucleotidyltransferase that catalyzes the formation of cyclic dinucleotide second messenger in response to some unknown stimulus. The polypeptide is Nucleotidyltransferase MB21D2 (Homo sapiens (Human)).